Here is a 155-residue protein sequence, read N- to C-terminus: MKCPFCGHSNTQVLDTRMSEDGDAVRRRRRCEACDRRFTTYERIELFFPAIVKKNGSRVDYTRAKLKDSMRLALRKRPVSAEAIDEAITRIEEKLLALGEKEIPSSQVGELVMRELRKLDKIAYIRFASVYRSFEDVSEFRDVLDEFAASTPRKG.

A zinc finger spans residues 3-34 (CPFCGHSNTQVLDTRMSEDGDAVRRRRRCEAC). In terms of domain architecture, ATP-cone spans 49–139 (PAIVKKNGSR…VYRSFEDVSE (91 aa)).

This sequence belongs to the NrdR family. The cofactor is Zn(2+).

Functionally, negatively regulates transcription of bacterial ribonucleotide reductase nrd genes and operons by binding to NrdR-boxes. The polypeptide is Transcriptional repressor NrdR (Cupriavidus necator (strain ATCC 17699 / DSM 428 / KCTC 22496 / NCIMB 10442 / H16 / Stanier 337) (Ralstonia eutropha)).